The primary structure comprises 111 residues: Cornifelin homolog (111 aa).

Belongs to the cornifelin family.

This is Cornifelin homolog (cnfn) from Xenopus tropicalis (Western clawed frog).